A 283-amino-acid chain; its full sequence is MTVQKSKNPQVDIAEDNAFFPSEYSLSQYTSPVSDLDGVDYPKPYRGKHKILVIAADERYLPTDNGKLFSTGNHPIETLLPLYHLHAAGFEFEVATISGLMTKFEYWAMPHKDEKVMPFFEQHKSLFRNPKKLADVVASLNADSEYAAIFVPGGHGALIGLPESEDVAAALQWAIENDRFVISLCHGPAAFLALRHGDNPLNGYSICAFPDAADKQTPEIGYMPGHLTWYFGEELKKMGMNIINDDITGRVHKDRKVLTGDSPFAANALGKLAAQEMLAAYAG.

3 residues coordinate Zn(2+): histidine 86, glutamate 91, and histidine 123. Catalysis depends on cysteine 185, which acts as the Nucleophile.

Belongs to the peptidase C56 family. HchA subfamily. In terms of assembly, homodimer.

The protein resides in the cytoplasm. It carries out the reaction N(omega)-(1-hydroxy-2-oxopropyl)-L-arginyl-[protein] + H2O = lactate + L-arginyl-[protein] + H(+). It catalyses the reaction N(6)-(1-hydroxy-2-oxopropyl)-L-lysyl-[protein] + H2O = lactate + L-lysyl-[protein] + H(+). The catalysed reaction is S-(1-hydroxy-2-oxopropyl)-L-cysteinyl-[protein] + H2O = lactate + L-cysteinyl-[protein] + H(+). The enzyme catalyses N(omega)-(1-hydroxy-2-oxoethyl)-L-arginyl-[protein] + H2O = L-arginyl-[protein] + glycolate + H(+). It carries out the reaction N(6)-(1-hydroxy-2-oxoethyl)-L-lysyl-[protein] + H2O = glycolate + L-lysyl-[protein] + H(+). It catalyses the reaction S-(1-hydroxy-2-oxoethyl)-L-cysteinyl-[protein] + H2O = glycolate + L-cysteinyl-[protein] + H(+). The catalysed reaction is N(2)-(1-hydroxy-2-oxopropyl)-dGTP + H2O = lactate + dGTP + H(+). The enzyme catalyses N(2)-(1-hydroxy-2-oxopropyl)-GTP + H2O = lactate + GTP + H(+). It carries out the reaction N(2)-(1-hydroxy-2-oxopropyl)-GDP + H2O = lactate + GDP + H(+). It catalyses the reaction N(2)-(1-hydroxy-2-oxopropyl)-GMP + H2O = lactate + GMP + H(+). The catalysed reaction is N(2)-(1-hydroxy-2-oxoethyl)-dGTP + H2O = dGTP + glycolate + H(+). The enzyme catalyses N(2)-(1-hydroxy-2-oxoethyl)-GTP + H2O = glycolate + GTP + H(+). It carries out the reaction N(2)-(1-hydroxy-2-oxoethyl)-GDP + H2O = glycolate + GDP + H(+). It catalyses the reaction N(2)-(1-hydroxy-2-oxoethyl)-GMP + H2O = glycolate + GMP + H(+). The catalysed reaction is an N(2)-(1-hydroxy-2-oxopropyl)-guanosine in RNA + H2O = a guanosine in RNA + lactate + H(+). The enzyme catalyses an N(2)-(1-hydroxy-2-oxopropyl)-2'-deoxyguanosine in DNA + H2O = a 2'-deoxyguanosine in DNA + lactate + H(+). It carries out the reaction an N(2)-(1-hydroxy-2-oxoethyl)-guanosine in RNA + H2O = a guanosine in RNA + glycolate + H(+). It catalyses the reaction an N(2)-(1-hydroxy-2-oxoethyl)-2'-deoxyguanosine in DNA + H2O = a 2'-deoxyguanosine in DNA + glycolate + H(+). In terms of biological role, protein and nucleotide deglycase that catalyzes the deglycation of the Maillard adducts formed between amino groups of proteins or nucleotides and reactive carbonyl groups of glyoxals. Thus, functions as a protein deglycase that repairs methylglyoxal- and glyoxal-glycated proteins, and releases repaired proteins and lactate or glycolate, respectively. Deglycates cysteine, arginine and lysine residues in proteins, and thus reactivates these proteins by reversing glycation by glyoxals. Acts on early glycation intermediates (hemithioacetals and aminocarbinols), preventing the formation of Schiff bases and advanced glycation endproducts (AGE). Also functions as a nucleotide deglycase able to repair glycated guanine in the free nucleotide pool (GTP, GDP, GMP, dGTP) and in DNA and RNA. Is thus involved in a major nucleotide repair system named guanine glycation repair (GG repair), dedicated to reversing methylglyoxal and glyoxal damage via nucleotide sanitization and direct nucleic acid repair. Plays an important role in protecting cells from carbonyl stress. The sequence is that of Protein/nucleic acid deglycase HchA from Escherichia coli O45:K1 (strain S88 / ExPEC).